We begin with the raw amino-acid sequence, 935 residues long: Potassium channel AKT1 (935 aa).

The Cytoplasmic portion of the chain corresponds to 1-106; the sequence is MARWGAARMA…YDRRYRIWET (106 aa). Residues 107 to 127 form a helical membrane-spanning segment; it reads FLIVLVVYSAWVSPFEFGFIP. Topologically, residues 128 to 136 are extracellular; that stretch reads KPTGALATA. Residues 137–157 form a helical membrane-spanning segment; the sequence is DNVVNAFFAVDIILTFFVAYL. Residues 158-178 are Cytoplasmic-facing; the sequence is DKMSYMLEDDPKKIAWRYSTT. A helical transmembrane segment spans residues 179–199; the sequence is WLVLDVASTIPSEFARRILPS. The Extracellular portion of the chain corresponds to 200–205; it reads KLRSYG. Residues 206-226 traverse the membrane as a helical; Voltage-sensor segment; that stretch reads FFNMLRLWRLRRVSSLFSRLE. Residues 227–240 are Cytoplasmic-facing; that stretch reads KDRHFNYFWVRCAK. Residues 241–261 traverse the membrane as a helical segment; the sequence is LICVTLFAVHCAACFYYLLAD. Residues 262–288 are Extracellular-facing; the sequence is RYPVPTSTWIGNYMADFHERSLWIRYV. The pore-forming intramembrane region spans 289–308; sequence TSVYWSITTLTTVGYGDLHA. The Extracellular portion of the chain corresponds to 309–312; the sequence is ENTR. Residues 313–333 traverse the membrane as a helical segment; sequence EMIFNIFYMLFNLGLTAYLIG. Residues 334 to 935 lie on the Cytoplasmic side of the membrane; the sequence is NMTNLVVHGT…WDAEKMKGKS (602 aa). An a nucleoside 3',5'-cyclic phosphate-binding site is contributed by 419-538; that stretch reads LFQGVSNDLI…TIIMNNLIQF (120 aa). 6 ANK repeats span residues 565-594, 598-627, 631-660, 662-691, 695-724, and 728-757; these read DLPI…DPNE, DGHT…DPNA, EGKV…DLSS, DTGL…DVNR, DGTT…DIDK, and NGWT…ATAS. The interval 826–854 is disordered; it reads SQAQRETDHPLSRGGLAATGSPNPSSGSR. The span at 845–854 shows a compositional bias: polar residues; that stretch reads GSPNPSSGSR. The region spanning 859-935 is the KHA domain; that stretch reads RVTISCPEKG…WDAEKMKGKS (77 aa).

This sequence belongs to the potassium channel family. Plant (TC 1.A.1.4) subfamily. The potassium channel is probably a homo- or heterotetrameric complex of pore-forming subunits. As to expression, highly expressed in the epidermis and endodermis of roots, and at lower level in cells of the vasculature and the cortex. Expressed in xylem parenchyma, phloem and mesophyll cells of leaves.

Its subcellular location is the membrane. Highly selective inward-rectifying potassium channel that mediates potassium uptake by plant roots. The sequence is that of Potassium channel AKT1 (AKT1) from Oryza sativa subsp. indica (Rice).